The following is a 172-amino-acid chain: Ribosomally synthesized cyclic peptide phomopsin precursor phomA (172 aa).

Positions 1-18 (MRFTPAIVIAAFCSLAVA) are cleaved as a signal peptide. 11 consecutive propeptides follow at residues 19–35 (APAA…AVED), 42–50 (KKRGEAVED), 57–65 (KKRGEAVED), 72–79 (KRGEAVED), 86–93 (KRGEAVED), 100–108 (KKRGEAVED), 115–122 (KRGEAVED), 129–137 (RKRGEAVED), 144–151 (KRGEAVED), 158–165 (KRGEAVED), and K172.

PhomA is processed by several endopeptidases including kexin proteases as well as the cluster-specific S41 family peptidase phomP1 and the oligopeptidase phomG to produce 10 identical copies of the hexapeptide Tyr-Val-Ile-Pro-Ile-Asp, that is further modified to yield phomapsins. The timing and order of proteolysis of the phomA precursor and PTMs are still unknown. Two tyrosinase-like enzymes, phomQ1 and phomQ2, catalyze the chlorination and hydroxylation of Tyr, respectively. PhomYb, is proposed to be involved in the construction of the macrocyclic structure. The other 4 ustYa family proteins may be involved in PTMs that generate the unique structure of phomopsin A. PhomYa is required for the hydroxylation of C-beta of Tyr. PhomYc, phomYd, and phomYe are responsible for the biosynthesis of 2,3-dehydroisoleucine (dIle), 2,3-dehydroaspartic acid (dAsp), and 3,4-dehydroproline (dPro), respectively. While dIle formation by phomYc is indispensable for the installation of dAsp by phomYd, the order of the other PTMs have not been elucidated yet. Most of the biosynthetic enzymes likely have broad substrate specificity, and thus, there might be a metabolic grid from a precursor to phomopsin A. The enzyme(s) responsible for the biosynthesis of 3,4-dehydrovaline (dVal) have also not been identified yet. Finally, phomM acts as an S-adenosylmethionine-dependent alpha-N-methyltransferase that catalyzes two successive N-methylation reactions, converting N-desmethyl-phomopsin A to phomopsin A and phomopsin A further to an N,N-dimethylated congener called phomopsin E.

It functions in the pathway mycotoxin biosynthesis. Its function is as follows. Ribosomally synthesized cyclic peptide phomopsin precursor; part of the gene cluster that mediates the biosynthesis of the phomopsins, a group of hexapeptide mycotoxins which infects lupins and causes lupinosis disease in livestock. The phomA translated product contains a 10-fold repeated peptide embedding the hexapeptide Tyr-Val-Ile-Pro-Ile-Asp, that is converted into phomapsins. After being excised from the precursor peptide by kexin proteases, the core peptides are cyclized and modified post-translationally by enzymes encoded within the corresponding gene cluster. This is Ribosomally synthesized cyclic peptide phomopsin precursor phomA from Diaporthe leptostromiformis (Lupinosis disease fungus).